The primary structure comprises 212 residues: Ras-related protein Rab-2A (212 aa).

GTP contacts are provided by Gly16, Val17, Gly18, Lys19, Ser20, Cys21, and Thr38. Ser20 contributes to the Mg(2+) binding site. A Switch 1 motif is present at residues 37–42; that stretch reads LTIGVE. Mg(2+) contacts are provided by Thr38 and Asp61. Residues 63–72 carry the Switch 2 motif; the sequence is AGQESFRSIT. The GTP site is built by Gly64, Asn119, Lys120, Asp122, Ala150, and Lys151. Residues Cys211 and Cys212 are each lipidated (S-geranylgeranyl cysteine).

It belongs to the small GTPase superfamily. Rab family. As to quaternary structure, interacts with PRKCI. Interacts with TRIP11. Interacts (in GTP-bound form) with GARIN1B. The cofactor is Mg(2+). Prenylated. Prenylation is required for association with cellular membranes.

It localises to the endoplasmic reticulum-Golgi intermediate compartment membrane. The protein resides in the melanosome. It is found in the endoplasmic reticulum membrane. The protein localises to the golgi apparatus membrane. Its subcellular location is the cytoplasmic vesicle. It localises to the secretory vesicle. The protein resides in the acrosome. The catalysed reaction is GTP + H2O = GDP + phosphate + H(+). Its activity is regulated as follows. Regulated by guanine nucleotide exchange factors (GEFs) which promote the exchange of bound GDP for free GTP, GTPase activating proteins (GAPs) which increase the GTP hydrolysis activity, and GDP dissociation inhibitors (GDIs) which inhibit the dissociation of the nucleotide from the GTPase. In terms of biological role, the small GTPases Rab are key regulators of intracellular membrane trafficking, from the formation of transport vesicles to their fusion with membranes. Rabs cycle between active GTP-bound and inactive GDP-bound states. In their active state, drive transport of vesicular carriers from donor organelles to acceptor organelles to regulate the membrane traffic that maintains organelle identity and morphology. RAB2A regulates autophagy by promoting autophagosome-lysosome fusion via recruitment of the HOPS endosomal tethering complex; this process involves autophagosomal RAB2A and lysosomal RAB39A recruitment of HOPS subcomplexes VPS39-VPS11 and VPS41-VPS16-VPS18-VPS33A, respectively, which assemble into a functional complex to mediate membrane tethering and SNAREs-driven membrane fusion. Required for protein transport from the endoplasmic reticulum to the Golgi complex. Regulates the compacted morphology of the Golgi. Together with RAB2B, redundantly required for efficient autophagic flux. This chain is Ras-related protein Rab-2A (RAB2A), found in Gallus gallus (Chicken).